Consider the following 160-residue polypeptide: Large ribosomal subunit protein eL21 (160 aa).

Composition is skewed to basic and acidic residues over residues 112–123 (NDQKKKEAKEKG) and 136–145 (REAHFVRTNG). Residues 112–145 (NDQKKKEAKEKGTWVQLKRQPAPPREAHFVRTNG) form a disordered region.

It belongs to the eukaryotic ribosomal protein eL21 family. In terms of assembly, component of the large ribosomal subunit.

The protein localises to the cytoplasm. It is found in the cytosol. It localises to the endoplasmic reticulum. Functionally, component of the large ribosomal subunit. The ribosome is a large ribonucleoprotein complex responsible for the synthesis of proteins in the cell. The polypeptide is Large ribosomal subunit protein eL21 (Mus musculus (Mouse)).